A 267-amino-acid chain; its full sequence is 2-oxo-hept-4-ene-1,7-dioate hydratase (267 aa).

Glutamate 106, glutamate 108, and glutamate 139 together coordinate Mg(2+).

The protein belongs to the hydratase/decarboxylase family. In terms of assembly, homodecamer. Mg(2+) is required as a cofactor.

The enzyme catalyses (4Z)-2-oxohept-4-enedioate + H2O = (4S)-4-hydroxy-2-oxoheptanedioate. It functions in the pathway aromatic compound metabolism; 4-hydroxyphenylacetate degradation; pyruvate and succinate semialdehyde from 4-hydroxyphenylacetate: step 6/7. Transforms 2-oxo-hept-4-ene-1,7-dioate (OHED) into 4-hydroxy-2-oxoheptanedioate, a step in the 4-hydroxyphenylacetic acid (4-HPA) degradation pathway. The protein is 2-oxo-hept-4-ene-1,7-dioate hydratase of Escherichia coli.